A 440-amino-acid chain; its full sequence is Xaa-Pro dipeptidase (440 aa).

The Mn(2+) site is built by aspartate 244, aspartate 255, histidine 336, glutamate 381, and glutamate 420.

The protein belongs to the peptidase M24B family. Bacterial-type prolidase subfamily. Mn(2+) serves as cofactor.

It catalyses the reaction Xaa-L-Pro dipeptide + H2O = an L-alpha-amino acid + L-proline. In terms of biological role, splits dipeptides with a prolyl residue in the C-terminal position. The chain is Xaa-Pro dipeptidase from Pseudoalteromonas translucida (strain TAC 125).